The sequence spans 147 residues: Large ribosomal subunit protein bL9 (147 aa).

The protein belongs to the bacterial ribosomal protein bL9 family.

Binds to the 23S rRNA. The protein is Large ribosomal subunit protein bL9 of Campylobacter jejuni subsp. jejuni serotype O:2 (strain ATCC 700819 / NCTC 11168).